The following is a 126-amino-acid chain: Glycine cleavage system H protein (126 aa).

The region spanning Lys22–Glu103 is the Lipoyl-binding domain. Lys63 is subject to N6-lipoyllysine.

Belongs to the GcvH family. The glycine cleavage system is composed of four proteins: P, T, L and H. Requires (R)-lipoate as cofactor.

Functionally, the glycine cleavage system catalyzes the degradation of glycine. The H protein shuttles the methylamine group of glycine from the P protein to the T protein. The polypeptide is Glycine cleavage system H protein (Thermoanaerobacter pseudethanolicus (strain ATCC 33223 / 39E) (Clostridium thermohydrosulfuricum)).